Here is a 458-residue protein sequence, read N- to C-terminus: Cysteine protease ATG4C (458 aa).

An N-acetylmethionine modification is found at methionine 1. Residue cysteine 111 is the Nucleophile of the active site. Residues aspartate 345 and histidine 347 contribute to the active site. Position 451 is a phosphoserine (serine 451). A Phosphothreonine modification is found at threonine 452.

It belongs to the peptidase C54 family.

It is found in the cytoplasm. The catalysed reaction is [protein]-C-terminal L-amino acid-glycyl-phosphatidylethanolamide + H2O = [protein]-C-terminal L-amino acid-glycine + a 1,2-diacyl-sn-glycero-3-phosphoethanolamine. With respect to regulation, inhibited by N-ethylmaleimide. Its function is as follows. Cysteine protease that plays a key role in autophagy by mediating both proteolytic activation and delipidation of ATG8 family proteins. The protease activity is required for proteolytic activation of ATG8 family proteins: cleaves the C-terminal amino acid of ATG8 proteins MAP1LC3 and GABARAPL2, to reveal a C-terminal glycine. Exposure of the glycine at the C-terminus is essential for ATG8 proteins conjugation to phosphatidylethanolamine (PE) and insertion to membranes, which is necessary for autophagy. In addition to the protease activity, also mediates delipidation of ATG8 family proteins. Catalyzes delipidation of PE-conjugated forms of ATG8 proteins during macroautophagy. Compared to ATG4B, the major protein for proteolytic activation of ATG8 proteins, shows weaker ability to cleave the C-terminal amino acid of ATG8 proteins, while it displays stronger delipidation activity. In contrast to other members of the family, weakly or not involved in phagophore growth during mitophagy. The polypeptide is Cysteine protease ATG4C (Mus musculus (Mouse)).